The sequence spans 310 residues: MTATVRVTAPAKINLHLEVLGQRSDGFHELAMVMQSIDLADQLDCSNRADGLIQLSCDQPGLSCGNDNLVFRAAALLRQRSGFHELGAQIHLRKRIPIGAGLAGGSSDGAAALLALNTLWGLGHTHDHLCAMAAELGSDMPFCLAGGIQLCFGRGECLESVPAAEQSLGVVLVKNPTVSVSTPWAYGECRRLKGDHYLSDEVAFAQRRQDLRAASWLNPLRAAEPPPLRNDLQDVVEPQTASVQMALRLLQDLPGQLRTAMSGSGPSCFALFPNRLDADQALDVARDSFAQAGFDAWSCSFVGHGAKLMP.

Residue K12 is part of the active site. Residue P97–S107 participates in ATP binding. D139 is an active-site residue.

This sequence belongs to the GHMP kinase family. IspE subfamily.

The enzyme catalyses 4-CDP-2-C-methyl-D-erythritol + ATP = 4-CDP-2-C-methyl-D-erythritol 2-phosphate + ADP + H(+). Its pathway is isoprenoid biosynthesis; isopentenyl diphosphate biosynthesis via DXP pathway; isopentenyl diphosphate from 1-deoxy-D-xylulose 5-phosphate: step 3/6. Its function is as follows. Catalyzes the phosphorylation of the position 2 hydroxy group of 4-diphosphocytidyl-2C-methyl-D-erythritol. The polypeptide is 4-diphosphocytidyl-2-C-methyl-D-erythritol kinase (Synechococcus sp. (strain CC9311)).